The primary structure comprises 627 residues: tRNA uridine 5-carboxymethylaminomethyl modification enzyme MnmG (627 aa).

FAD is bound by residues 16–21, Val128, and Ser183; that span reads GAGHAG. 275–289 is an NAD(+) binding site; sequence GPRYCPSIEDKVMRF. Residue Gln372 participates in FAD binding.

The protein belongs to the MnmG family. Homodimer. Heterotetramer of two MnmE and two MnmG subunits. FAD is required as a cofactor.

It localises to the cytoplasm. NAD-binding protein involved in the addition of a carboxymethylaminomethyl (cmnm) group at the wobble position (U34) of certain tRNAs, forming tRNA-cmnm(5)s(2)U34. The protein is tRNA uridine 5-carboxymethylaminomethyl modification enzyme MnmG of Geobacter sulfurreducens (strain ATCC 51573 / DSM 12127 / PCA).